Reading from the N-terminus, the 124-residue chain is NADH dehydrogenase [ubiquinone] 1 alpha subcomplex subunit 6 (124 aa).

It belongs to the complex I LYR family.

The protein resides in the mitochondrion inner membrane. Functionally, accessory subunit of the mitochondrial membrane respiratory chain NADH dehydrogenase (Complex I), that is believed to be not involved in catalysis. Complex I functions in the transfer of electrons from NADH to the respiratory chain. The immediate electron acceptor for the enzyme is believed to be ubiquinone. The protein is NADH dehydrogenase [ubiquinone] 1 alpha subcomplex subunit 6 (ndufa6) of Dictyostelium discoideum (Social amoeba).